A 500-amino-acid polypeptide reads, in one-letter code: NAD(P)H-quinone oxidoreductase chain 4, chloroplastic (500 aa).

The next 14 helical transmembrane spans lie at 4-24 (FYWLTIIVVLPISAGSLIALL), 37-57 (ICICLFELLLTTYVFCYHFQL), 80-100 (LGIDGLSIGPILLTGFITTLA), 113-130 (LFHFLMLAMYSGQIGLFS), 134-154 (LLLFFIMWELELIPVYLLLSM), 167-187 (FILYTAGGSIFLLMGVLGMGL), 208-228 (ALEIIFYFGFLIAYAVKSPII), 242-262 (HYSTCMLLAGILLKMGAYGLV), 272-292 (AHSIFSPWLMIVGTIQIIYAA), 305-325 (IAYSSVSHMGFIIIGISSITD), 330-350 (GAILQIISHGFIGAALFFLAG), 386-406 (LALPGMSGFVAELVIFLGIIT), 416-436 (ILITFVMAIGMILTPIYSLSM), and 462-482 (IFILICILLPIIGIGIYPDFV).

Belongs to the complex I subunit 4 family.

Its subcellular location is the plastid. It localises to the chloroplast thylakoid membrane. It carries out the reaction a plastoquinone + NADH + (n+1) H(+)(in) = a plastoquinol + NAD(+) + n H(+)(out). It catalyses the reaction a plastoquinone + NADPH + (n+1) H(+)(in) = a plastoquinol + NADP(+) + n H(+)(out). This Nuphar advena (Common spatterdock) protein is NAD(P)H-quinone oxidoreductase chain 4, chloroplastic.